The sequence spans 318 residues: Pheromone-regulated membrane protein 5 (318 aa).

A helical membrane pass occupies residues 78-98; it reads FIXVGGIAGVIFLAILLWWVI. Position 129 is a phosphoserine (Ser129). Residues 238–247 are compositionally biased toward low complexity; it reads TISSSSASSL. The interval 238–318 is disordered; it reads TISSSSASSL…HMLEGKEQDE (81 aa). The segment covering 250-261 has biased composition (basic and acidic residues); sequence GNEKEVGEDIRK. A compositionally biased stretch (polar residues) spans 276-285; it reads SPESDGSVNR. 3 positions are modified to phosphoserine: Ser279, Ser282, and Ser288. Positions 309 to 318 are enriched in basic and acidic residues; the sequence is HMLEGKEQDE. Lys314 participates in a covalent cross-link: Glycyl lysine isopeptide (Lys-Gly) (interchain with G-Cter in ubiquitin).

It belongs to the PRM5 family.

It is found in the membrane. This Saccharomyces cerevisiae (strain FostersO) (Baker's yeast) protein is Pheromone-regulated membrane protein 5 (PRM5).